The primary structure comprises 306 residues: Probable rRNA-processing protein EBP2 (306 aa).

Position 1 is an N-acetylmethionine (Met-1). Disordered stretches follow at residues 1–20 (MDTPPLSESDSESDACLASD), 75–103 (GPVPEVSETQPTPQNQDQKKGVNPEDDFQ), and 150–169 (IRQKLQTKQAAMEKSEKAKQ). Thr-3 bears the Phosphothreonine mark. Phosphoserine is present on residues Ser-7, Ser-9, Ser-11, and Ser-13. Over residues 81-90 (SETQPTPQNQ) the composition is skewed to polar residues. Positions 91 to 103 (DQKKGVNPEDDFQ) are enriched in basic and acidic residues. Residue Lys-93 forms a Glycyl lysine isopeptide (Lys-Gly) (interchain with G-Cter in SUMO2) linkage. Residues 135–171 (DYFAEMAKSDQQMQKIRQKLQTKQAAMEKSEKAKQLR) are a coiled coil. Residues Lys-179 and Lys-218 each participate in a glycyl lysine isopeptide (Lys-Gly) (interchain with G-Cter in SUMO2) cross-link. Basic and acidic residues predominate over residues 213–224 (LEGDQKPVERSA). The segment at 213–306 (LEGDQKPVER…ARQKLKSKAR (94 aa)) is disordered. Ser-264 and Ser-270 each carry phosphoserine. Residues 274–306 (KVAHGKGSRRPGKKGANKRPGKRARQKLKSKAR) show a composition bias toward basic residues.

It belongs to the EBP2 family. Interacts with WDR46.

It localises to the nucleus. The protein localises to the nucleolus. Its function is as follows. Required for the processing of the 27S pre-rRNA. The chain is Probable rRNA-processing protein EBP2 (Ebna1bp2) from Mus musculus (Mouse).